The primary structure comprises 683 residues: Cytoskeleton-associated protein 2 (683 aa).

Disordered regions lie at residues 1–28 (MSTP…QRRQ) and 153–175 (NSKK…KKPV). Residues Ser178 and Ser190 each carry the phosphoserine modification. Disordered regions lie at residues 214–236 (KATK…SSNM) and 336–403 (EKSE…EKPV). A compositionally biased stretch (polar residues) spans 219-236 (QPVNTSSVTVKSNRSSNM). 2 stretches are compositionally biased toward basic and acidic residues: residues 336–345 (EKSEPVDQRR) and 362–376 (ETSE…EWKA). Residue Ser534 is modified to Phosphoserine. 2 positions are modified to phosphothreonine: Thr579 and Thr582. The residue at position 595 (Ser595) is a Phosphoserine. A phosphothreonine mark is found at Thr596 and Thr597. Position 599 is a phosphotyrosine (Tyr599). Ser602 carries the phosphoserine modification.

It belongs to the CKAP2 family. Associates with alpha- and beta-tubulins. Abundant in testis, thymus, and in tumor derived cell lines, while barely detectable in liver, prostate, and kidney.

The protein localises to the cytoplasm. It localises to the cytoskeleton. The protein resides in the spindle. It is found in the spindle pole. Its function is as follows. Possesses microtubule stabilizing properties. Involved in regulating aneuploidy, cell cycling, and cell death in a p53/TP53-dependent manner. In Homo sapiens (Human), this protein is Cytoskeleton-associated protein 2.